We begin with the raw amino-acid sequence, 225 residues long: Ribosomal RNA large subunit methyltransferase E (225 aa).

Gly-79, Trp-81, Asp-97, Asp-113, and Asp-137 together coordinate S-adenosyl-L-methionine. Catalysis depends on Lys-177, which acts as the Proton acceptor.

This sequence belongs to the class I-like SAM-binding methyltransferase superfamily. RNA methyltransferase RlmE family.

It is found in the cytoplasm. It catalyses the reaction uridine(2552) in 23S rRNA + S-adenosyl-L-methionine = 2'-O-methyluridine(2552) in 23S rRNA + S-adenosyl-L-homocysteine + H(+). In terms of biological role, specifically methylates the uridine in position 2552 of 23S rRNA at the 2'-O position of the ribose in the fully assembled 50S ribosomal subunit. This is Ribosomal RNA large subunit methyltransferase E from Acidiphilium cryptum (strain JF-5).